A 314-amino-acid polypeptide reads, in one-letter code: Ribosomal RNA small subunit methyltransferase H (314 aa).

S-adenosyl-L-methionine contacts are provided by residues glycine 35 to histidine 37, aspartate 55, phenylalanine 79, aspartate 101, and glutamine 108.

It belongs to the methyltransferase superfamily. RsmH family.

The protein localises to the cytoplasm. The catalysed reaction is cytidine(1402) in 16S rRNA + S-adenosyl-L-methionine = N(4)-methylcytidine(1402) in 16S rRNA + S-adenosyl-L-homocysteine + H(+). Specifically methylates the N4 position of cytidine in position 1402 (C1402) of 16S rRNA. The chain is Ribosomal RNA small subunit methyltransferase H from Pectobacterium carotovorum subsp. carotovorum (strain PC1).